The chain runs to 239 residues: Geranylgeranylglyceryl phosphate synthase (239 aa).

Residues Asp-18 and Ser-45 each coordinate Mg(2+). Sn-glycerol 1-phosphate is bound by residues 166 to 172 (YLEAGSG), 197 to 198 (GG), and 219 to 220 (GT).

The protein belongs to the GGGP/HepGP synthase family. Group II subfamily. It depends on Mg(2+) as a cofactor.

The protein localises to the cytoplasm. The catalysed reaction is sn-glycerol 1-phosphate + (2E,6E,10E)-geranylgeranyl diphosphate = sn-3-O-(geranylgeranyl)glycerol 1-phosphate + diphosphate. Its pathway is membrane lipid metabolism; glycerophospholipid metabolism. Prenyltransferase that catalyzes the transfer of the geranylgeranyl moiety of geranylgeranyl diphosphate (GGPP) to the C3 hydroxyl of sn-glycerol-1-phosphate (G1P). This reaction is the first ether-bond-formation step in the biosynthesis of archaeal membrane lipids. The protein is Geranylgeranylglyceryl phosphate synthase of Pyrobaculum aerophilum (strain ATCC 51768 / DSM 7523 / JCM 9630 / CIP 104966 / NBRC 100827 / IM2).